Consider the following 453-residue polypeptide: Ribosome biogenesis protein YTM1 (453 aa).

The interval 19–102 (VKVRFFTNEE…ETVIDLQYTR (84 aa)) is ubiquitin-like (UBL) domain. The sufficient for interaction with ERB1 and association with 66S pre-ribosomes stretch occupies residues 112–453 (SFTNEDWISS…KKIDIYREAN (342 aa)). WD repeat units follow at residues 128–166 (GHGAVLASNMKLQESKILSGSYDGVVRTYNMSGEVESQY), 168–206 (GHSGPVKSVRWISPTRIVSAGNDHSLRLWKTKLAGVEEG), 218–257 (GHKGPVVDLAVDYKSNKIISAGNDSVVGVWSTNASDMSAV), 292–332 (GHGQ…CVDT), 334–373 (STGFSLLSILQLPNLHLVASGSSARHINLHDPRASSSTEQ), 380–420 (GHTN…AMYT), and 422–453 (GKGGKVFGVSWDPIGIVSGGEDKKIDIYREAN).

Belongs to the WD repeat WDR12/YTM1 family. In terms of assembly, component of the NOP7 complex, composed of ERB1, NOP7 and YTM1. The complex is held together by ERB1, which interacts with NOP7 via its N-terminal domain and with YTM1 via a high-affinity interaction between the seven-bladed beta-propeller domains of the 2 proteins. The NOP7 complex associates with the 66S pre-ribosome. Interacts (via UBL domain) with MDN1 (via VWFA/MIDAS domain).

Its subcellular location is the nucleus. The protein resides in the nucleolus. The protein localises to the nucleoplasm. Its function is as follows. Component of the NOP7 complex, which is required for maturation of the 25S and 5.8S ribosomal RNAs and formation of the 60S ribosome. This is Ribosome biogenesis protein YTM1 from Meyerozyma guilliermondii (strain ATCC 6260 / CBS 566 / DSM 6381 / JCM 1539 / NBRC 10279 / NRRL Y-324) (Yeast).